A 533-amino-acid polypeptide reads, in one-letter code: WD repeat-containing protein JIP5 (533 aa).

WD repeat units follow at residues 26-67 (NYSD…EKQS), 84-130 (GKVS…GSCR), 176-215 (NSNDSITKLCHSATNSCLLAGTENGHVLVYDSKNLGGSKL), 264-309 (NQDD…FMDQ), and 372-409 (GAADEVGLLEIDYDYRLISAGMESLKIWSNEQNEEIAL). Acidic residues-rich tracts occupy residues 408 to 428 (ALDESDDSDDESDSDNSEDDL) and 437 to 452 (ASDEEIEENKEEEDEK). The disordered stretch occupies residues 408-533 (ALDESDDSDD…EHGIRRFDDL (126 aa)). 2 stretches are compositionally biased toward basic and acidic residues: residues 453 to 463 (EDKPVKIDHPL) and 521 to 533 (QKHEHGIRRFDDL).

This sequence belongs to the WD repeat WDR55 family.

It localises to the nucleus. Its subcellular location is the nucleolus. The sequence is that of WD repeat-containing protein JIP5 (JIP5) from Scheffersomyces stipitis (strain ATCC 58785 / CBS 6054 / NBRC 10063 / NRRL Y-11545) (Yeast).